The sequence spans 84 residues: Exodeoxyribonuclease 7 small subunit (84 aa).

It belongs to the XseB family. In terms of assembly, heterooligomer composed of large and small subunits.

The protein resides in the cytoplasm. The enzyme catalyses Exonucleolytic cleavage in either 5'- to 3'- or 3'- to 5'-direction to yield nucleoside 5'-phosphates.. Functionally, bidirectionally degrades single-stranded DNA into large acid-insoluble oligonucleotides, which are then degraded further into small acid-soluble oligonucleotides. The protein is Exodeoxyribonuclease 7 small subunit of Yersinia enterocolitica serotype O:8 / biotype 1B (strain NCTC 13174 / 8081).